Here is a 449-residue protein sequence, read N- to C-terminus: Cyclin-B1-1 (449 aa).

Disordered stretches follow at residues 1–34 (MATR…VAGR) and 90–143 (AVAP…SVRK). Composition is skewed to low complexity over residues 90-102 (AVAP…PAQR) and 121-134 (EISS…RQQS).

It belongs to the cyclin family. Cyclin AB subfamily.

The protein is Cyclin-B1-1 (CYCB1-1) of Oryza sativa subsp. japonica (Rice).